Here is a 367-residue protein sequence, read N- to C-terminus: Ferrochelatase (367 aa).

2 residues coordinate Fe cation: His226 and Glu307.

It belongs to the ferrochelatase family.

It localises to the cytoplasm. It carries out the reaction heme b + 2 H(+) = protoporphyrin IX + Fe(2+). The protein operates within porphyrin-containing compound metabolism; protoheme biosynthesis; protoheme from protoporphyrin-IX: step 1/1. In terms of biological role, catalyzes the ferrous insertion into protoporphyrin IX. This is Ferrochelatase from Burkholderia pseudomallei (strain 1106a).